Reading from the N-terminus, the 248-residue chain is Ribosomal RNA small subunit methyltransferase G (248 aa).

S-adenosyl-L-methionine-binding positions include Gly85, Phe90, 108 to 110 (DSS), 137 to 138 (AE), and Arg156.

The protein belongs to the methyltransferase superfamily. RNA methyltransferase RsmG family.

Its subcellular location is the cytoplasm. Specifically methylates the N7 position of a guanine in 16S rRNA. The polypeptide is Ribosomal RNA small subunit methyltransferase G (Prochlorococcus marinus (strain NATL1A)).